The chain runs to 357 residues: MSRPIQALIDPAALERNLAIVRRHAPRSRVMAVIKADAYGHGLLCAAEALAEAEGFALLELDAAVRLREAGYRQTILLLEGFFDIDELSWIEQYRLSTVVHHPEQLAMLEAVRRRATLDVFLKLNSGMNRLGFTPTEFPAALEHLKANPAVRQITLMTHFACADEPDRNDSIAAQLQCFNLAAGGRYMPRSLANSAAILRFPEAHADWVRPGIMLYGSSPLAHTTAEQLGLQPAMTVSSRIISVQTLRPNDGVGYGHAFRAGSSMRVGIVAGGYADGYPRHAPTGTPVLVKGRRTRIVGRISMDMLHVDLSEIEDAGVGSPVTLWGRGMPVDEVARAAGTLGYELLCAIAPRMQRVT.

Lysine 35 (proton acceptor; specific for D-alanine) is an active-site residue. Lysine 35 is modified (N6-(pyridoxal phosphate)lysine). Arginine 130 lines the substrate pocket. The Proton acceptor; specific for L-alanine role is filled by tyrosine 255. Residue methionine 303 coordinates substrate.

The protein belongs to the alanine racemase family. Pyridoxal 5'-phosphate is required as a cofactor.

The enzyme catalyses L-alanine = D-alanine. It participates in amino-acid biosynthesis; D-alanine biosynthesis; D-alanine from L-alanine: step 1/1. Functionally, catalyzes the interconversion of L-alanine and D-alanine. May also act on other amino acids. The protein is Alanine racemase (alr) of Nitrosospira multiformis (strain ATCC 25196 / NCIMB 11849 / C 71).